The sequence spans 88 residues: Phosphocarrier protein HPr (88 aa).

Positions 1-88 constitute an HPr domain; that stretch reads MKKFQAVIKD…KACLEKNKVI (88 aa). Histidine 15 serves as the catalytic Pros-phosphohistidine intermediate. A Phosphoserine; by HPrK/P modification is found at serine 47.

Belongs to the HPr family.

The protein localises to the cytoplasm. Its activity is regulated as follows. Phosphorylation on Ser-47 inhibits the phosphoryl transfer from enzyme I to HPr. Functionally, general (non sugar-specific) component of the phosphoenolpyruvate-dependent sugar phosphotransferase system (sugar PTS). This major carbohydrate active-transport system catalyzes the phosphorylation of incoming sugar substrates concomitantly with their translocation across the cell membrane. The phosphoryl group from phosphoenolpyruvate (PEP) is transferred to the phosphoryl carrier protein HPr by enzyme I. Phospho-HPr then transfers it to the PTS EIIA domain. In terms of biological role, P-Ser-HPr interacts with the catabolite control protein A (CcpA), forming a complex that binds to DNA at the catabolite response elements cre, operator sites preceding a large number of catabolite-regulated genes. Thus, P-Ser-HPr is a corepressor in carbon catabolite repression (CCR), a mechanism that allows bacteria to coordinate and optimize the utilization of available carbon sources. P-Ser-HPr also plays a role in inducer exclusion, in which it probably interacts with several non-PTS permeases and inhibits their transport activity. The chain is Phosphocarrier protein HPr (ptsH) from Mycoplasma genitalium (strain ATCC 33530 / DSM 19775 / NCTC 10195 / G37) (Mycoplasmoides genitalium).